A 282-amino-acid chain; its full sequence is Type 1 encapsulin shell protein (282 aa).

It belongs to the encapsulin family. Family 1 subfamily. In terms of assembly, initially thought to form a 180 subunit shell. Forms hollow shells composed of 240 subunits, making a shell about 42-43 nm in diameter. The monomer is capable of assuming 4 different conformations which allows packaging into the icosahedron. The shell has 12 pentameric and 30 hexameric capsomers which form the vertices and faces of the icosahedral nanocompartment.

It is found in the encapsulin nanocompartment. In terms of biological role, shell component of a type 1 encapsulin nanocompartment. Assembles into proteinaceous icosahedral shells 42-43 nm in diameter with an iron- and phosphorus-rich core (1Fe:1.1P) which can store over 23,000-35,000 iron atoms (with a calculated maximum of 83,000 Fe). There are 2 types of negatively charged open pores in the cryo-electron structure; a 3-fold pore where 3 hexamers meet with a minimal size of 7.2 Angstroms and a 5-fold pore where pentamers meet with a minimal size of 2.3 Angstroms. The 2-fold pore seen in other encapsulin nanocompartments is closed. Empty compartments can be generated in E.coli. Both types of pore have extra density in their centers in the structure. 2 different cargo proteins have been identified (IMEF and Fer); when both are expressed in E.coli with the shell protein only IMEF is detected within the nanocompartment. E.coli expressing all 3 genes stores the largest amount of iron and is protected from Fe/H2O2-induced oxidative stress. Part of the iron-mineralizing encapsulin-associated Firmicute (IMEF) system. The sequence is that of Type 1 encapsulin shell protein from Bacillus thermotolerans (Quasibacillus thermotolerans).